Here is a 164-residue protein sequence, read N- to C-terminus: uncharacterized protein (164 aa).

A compositionally biased stretch (polar residues) spans 1–29; it reads MLCVRSSSSNLESDTYLSRYSTRASAGTG. Residues 1 to 62 are disordered; the sequence is MLCVRSSSSN…SKPSNNKNID (62 aa). Positions 43-62 are enriched in low complexity; sequence SSDSSSSSSESKPSNNKNID.

This is an uncharacterized protein from Schizosaccharomyces pombe (strain 972 / ATCC 24843) (Fission yeast).